Reading from the N-terminus, the 75-residue chain is uncharacterized protein (75 aa).

The first 25 residues, 1-25 (MSLFYRAVALGTLSALVWYSTSILA), serve as a signal peptide directing secretion. A helical membrane pass occupies residues 55–75 (YRALLAFSLVICGTLLVTCVI).

It is found in the host endoplasmic reticulum membrane. Its function is as follows. Plays a role in the down-regulation of the host NKG2D ligand MICA by targeting ER-resident MICA to proteasomal degradation prior to the GPI-anchoring step. In turn, MICA reduction diminishes NK-cell killing of HCMV-infected cells. This is an uncharacterized protein from Homo sapiens (Human).